Here is a 397-residue protein sequence, read N- to C-terminus: Pyridinium-3,5-bisthiocarboxylic acid mononucleotide nickel insertion protein (397 aa).

It belongs to the LarC family.

The enzyme catalyses Ni(II)-pyridinium-3,5-bisthiocarboxylate mononucleotide = pyridinium-3,5-bisthiocarboxylate mononucleotide + Ni(2+). Involved in the biosynthesis of a nickel-pincer cofactor ((SCS)Ni(II) pincer complex). Binds Ni(2+), and functions in nickel delivery to pyridinium-3,5-bisthiocarboxylic acid mononucleotide (P2TMN), to form the mature cofactor. Is thus probably required for the activation of nickel-pincer cofactor-dependent enzymes. The sequence is that of Pyridinium-3,5-bisthiocarboxylic acid mononucleotide nickel insertion protein from Thermotoga petrophila (strain ATCC BAA-488 / DSM 13995 / JCM 10881 / RKU-1).